Consider the following 118-residue polypeptide: ATP-dependent Clp protease adapter protein ClpS (118 aa).

The tract at residues 1 to 24 (MNGSSNSGSPGGGQTGDDDGTGFD) is disordered.

Belongs to the ClpS family. Binds to the N-terminal domain of the chaperone ClpA.

Its function is as follows. Involved in the modulation of the specificity of the ClpAP-mediated ATP-dependent protein degradation. The chain is ATP-dependent Clp protease adapter protein ClpS from Hyphomonas neptunium (strain ATCC 15444).